A 151-amino-acid chain; its full sequence is Deoxyuridine 5'-triphosphate nucleotidohydrolase (151 aa).

Substrate is bound by residues 70 to 72 (RSG), N83, 87 to 89 (LID), and M97.

This sequence belongs to the dUTPase family. Mg(2+) is required as a cofactor.

The enzyme catalyses dUTP + H2O = dUMP + diphosphate + H(+). The protein operates within pyrimidine metabolism; dUMP biosynthesis; dUMP from dCTP (dUTP route): step 2/2. Functionally, this enzyme is involved in nucleotide metabolism: it produces dUMP, the immediate precursor of thymidine nucleotides and it decreases the intracellular concentration of dUTP so that uracil cannot be incorporated into DNA. In Psychromonas ingrahamii (strain DSM 17664 / CCUG 51855 / 37), this protein is Deoxyuridine 5'-triphosphate nucleotidohydrolase.